Reading from the N-terminus, the 215-residue chain is Adenylate kinase (215 aa).

ATP is bound at residue 10–15 (GAGKGT). Positions 30–59 (STGDIFRDAVNQGSELGQEAQKYMSSGQLV) are NMP. AMP-binding positions include Thr-31, Arg-36, 57–59 (QLV), 85–88 (GFPR), and Gln-92. Residues 126 to 163 (GRISCRECKRVYNLNFNPPREQGKCDSCGGELVQRNDD) are LID. An ATP-binding site is contributed by Arg-127. The Zn(2+) site is built by Cys-130 and Cys-133. 136–137 (VY) is an ATP binding site. Residues Cys-150 and Cys-153 each coordinate Zn(2+). Residues Arg-160 and Arg-171 each coordinate AMP. Arg-199 contacts ATP.

Belongs to the adenylate kinase family. As to quaternary structure, monomer.

The protein localises to the cytoplasm. The catalysed reaction is AMP + ATP = 2 ADP. It participates in purine metabolism; AMP biosynthesis via salvage pathway; AMP from ADP: step 1/1. Catalyzes the reversible transfer of the terminal phosphate group between ATP and AMP. Plays an important role in cellular energy homeostasis and in adenine nucleotide metabolism. This is Adenylate kinase from Syntrophomonas wolfei subsp. wolfei (strain DSM 2245B / Goettingen).